The chain runs to 445 residues: UPF0210 protein SPG_0223 (445 aa).

It belongs to the UPF0210 family. In terms of assembly, homodimer.

In Streptococcus pneumoniae serotype 19F (strain G54), this protein is UPF0210 protein SPG_0223.